The sequence spans 385 residues: Anhydro-N-acetylmuramic acid kinase (385 aa).

Residue 12-19 (GTSLDGID) participates in ATP binding.

This sequence belongs to the anhydro-N-acetylmuramic acid kinase family.

The enzyme catalyses 1,6-anhydro-N-acetyl-beta-muramate + ATP + H2O = N-acetyl-D-muramate 6-phosphate + ADP + H(+). It participates in amino-sugar metabolism; 1,6-anhydro-N-acetylmuramate degradation. It functions in the pathway cell wall biogenesis; peptidoglycan recycling. Catalyzes the specific phosphorylation of 1,6-anhydro-N-acetylmuramic acid (anhMurNAc) with the simultaneous cleavage of the 1,6-anhydro ring, generating MurNAc-6-P. Is required for the utilization of anhMurNAc either imported from the medium or derived from its own cell wall murein, and thus plays a role in cell wall recycling. The sequence is that of Anhydro-N-acetylmuramic acid kinase from Bacillus thuringiensis (strain Al Hakam).